The following is a 316-amino-acid chain: MANLKDIRDRIVSVKNTRKITEAMRLVAAAKVRRAQDQVLRSRPFADRLARVLENIQSRMQFEAADSPLLNKREVKTITLLAVTGDRGLCGGYNANIIKRTEKRYAELKGQGYSPDLVLIGKKAIGYFENRSSLYNIRATFKELEQVPTSEDAASITSEVLAEFLSESTDRVEVIFTKFVSLVSCNPTIQTLLPLDPQGIADSEDEIFRLTTKDSQLIIEKDAAPTNEEPKLPSDIVFEQSPDQLLNALLPLYLQNQLLRALQESAASELASRMTAMNNASDNAKELAKNLTIDYNKARQAAITQEILEVVGGASA.

This sequence belongs to the ATPase gamma chain family. In terms of assembly, F-type ATPases have 2 components, CF(1) - the catalytic core - and CF(0) - the membrane proton channel. CF(1) has five subunits: alpha(3), beta(3), gamma(1), delta(1), epsilon(1). CF(0) has three main subunits: a, b and c.

Its subcellular location is the cellular thylakoid membrane. Functionally, produces ATP from ADP in the presence of a proton gradient across the membrane. The gamma chain is believed to be important in regulating ATPase activity and the flow of protons through the CF(0) complex. The polypeptide is ATP synthase gamma chain (Prochlorococcus marinus (strain NATL1A)).